Here is a 666-residue protein sequence, read N- to C-terminus: Transketolase (666 aa).

His-26 contributes to the substrate binding site. Thiamine diphosphate-binding positions include His-66 and 114 to 116 (GPL). Asp-155 contributes to the Mg(2+) binding site. Thiamine diphosphate-binding residues include Gly-156 and Asn-185. Residues Asn-185 and Ile-187 each coordinate Mg(2+). His-261, Arg-358, and Ser-385 together coordinate substrate. Residue His-261 coordinates thiamine diphosphate. Glu-411 functions as the Proton donor in the catalytic mechanism. Phe-437 serves as a coordination point for thiamine diphosphate. Substrate is bound by residues His-461, Asp-469, and Arg-520.

Belongs to the transketolase family. In terms of assembly, homodimer. The cofactor is Mg(2+). Ca(2+) is required as a cofactor. Requires Mn(2+) as cofactor. It depends on Co(2+) as a cofactor. Thiamine diphosphate serves as cofactor.

It carries out the reaction D-sedoheptulose 7-phosphate + D-glyceraldehyde 3-phosphate = aldehydo-D-ribose 5-phosphate + D-xylulose 5-phosphate. Catalyzes the transfer of a two-carbon ketol group from a ketose donor to an aldose acceptor, via a covalent intermediate with the cofactor thiamine pyrophosphate. The protein is Transketolase (tkt) of Buchnera aphidicola subsp. Baizongia pistaciae (strain Bp).